A 286-amino-acid polypeptide reads, in one-letter code: 2,3,4,5-tetrahydropyridine-2,6-dicarboxylate N-succinyltransferase (286 aa).

Substrate is bound by residues Arg109 and Asp146.

The protein belongs to the transferase hexapeptide repeat family. Homotrimer.

It is found in the cytoplasm. The enzyme catalyses (S)-2,3,4,5-tetrahydrodipicolinate + succinyl-CoA + H2O = (S)-2-succinylamino-6-oxoheptanedioate + CoA. It participates in amino-acid biosynthesis; L-lysine biosynthesis via DAP pathway; LL-2,6-diaminopimelate from (S)-tetrahydrodipicolinate (succinylase route): step 1/3. The polypeptide is 2,3,4,5-tetrahydropyridine-2,6-dicarboxylate N-succinyltransferase (Bartonella tribocorum (strain CIP 105476 / IBS 506)).